Reading from the N-terminus, the 362-residue chain is 3-dehydroquinate synthase (362 aa).

Residues 74–79 (DGEEHK), 108–112 (GVTGD), 132–133 (TT), lysine 145, and lysine 154 each bind NAD(+). Zn(2+) is bound by residues glutamate 187, histidine 250, and histidine 267.

The protein belongs to the sugar phosphate cyclases superfamily. Dehydroquinate synthase family. The cofactor is Co(2+). Zn(2+) serves as cofactor. NAD(+) is required as a cofactor.

It is found in the cytoplasm. It carries out the reaction 7-phospho-2-dehydro-3-deoxy-D-arabino-heptonate = 3-dehydroquinate + phosphate. It participates in metabolic intermediate biosynthesis; chorismate biosynthesis; chorismate from D-erythrose 4-phosphate and phosphoenolpyruvate: step 2/7. In terms of biological role, catalyzes the conversion of 3-deoxy-D-arabino-heptulosonate 7-phosphate (DAHP) to dehydroquinate (DHQ). This chain is 3-dehydroquinate synthase, found in Syntrophotalea carbinolica (strain DSM 2380 / NBRC 103641 / GraBd1) (Pelobacter carbinolicus).